The sequence spans 1677 residues: ELMO domain-containing protein E (1677 aa).

Disordered stretches follow at residues 112-139, 168-194, 264-372, 592-625, 775-801, 888-947, 982-1002, 1047-1075, 1122-1141, 1197-1248, 1261-1404, 1434-1454, 1467-1593, and 1654-1677; these read TTTS…SSPS, NSKD…SNIK, QLHG…NTTE, DDDN…RSNS, PNSN…STNN, INKN…NQDI, KIRS…SQPE, STNN…ETRS, KQKS…GNVS, NNNI…DNHA, DDDD…RKKR, SPGS…PQPE, KNPE…GDVS, and ESQR…SSSK. Low complexity-rich tracts occupy residues 115-139 and 172-194; these read SSSS…SSPS and TNNS…SNIK. A compositionally biased stretch (gly residues) spans 269–278; that stretch reads SIGGGGGGSG. Low complexity-rich tracts occupy residues 307 to 334, 341 to 352, and 597 to 616; these read SQSN…KPNN, TTTTTTTTTTTS, and NNNN…NNYN. The ELMO domain maps to 492-710; sequence SHQILLSDLW…HTREIIEKVC (219 aa). Positions 891–903 are enriched in gly residues; sequence NGGGGGGGGGGGV. Positions 922-933 are enriched in acidic residues; it reads IDDSDDENDNDE. Composition is skewed to low complexity over residues 934–946 and 985–996; these read VNNN…INQD and SSSSTPDTSSPP. Positions 1186 to 1212 form a coiled coil; sequence LLDDVLDLNQTNNNIDNENDDINEAII. A compositionally biased stretch (acidic residues) spans 1228 to 1238; it reads EEEEEEEEEEE. Positions 1285–1305 are enriched in low complexity; sequence NNTTTTTTTTTTTTTTTTNTT. Residues 1306 to 1334 show a composition bias toward polar residues; the sequence is GQKRISILSTDTNRPGSSNYGESSLSNGS. Residues 1387–1397 show a composition bias toward acidic residues; the sequence is DDEDDEDDDDK. A compositionally biased stretch (polar residues) spans 1445–1454; the sequence is PHLSVSPQPE. 3 stretches are compositionally biased toward low complexity: residues 1475–1488, 1503–1574, and 1663–1677; these read LSSS…PLLS, SNLI…PSSS, and ASSS…SSSK.

The polypeptide is ELMO domain-containing protein E (elmoE) (Dictyostelium discoideum (Social amoeba)).